A 202-amino-acid chain; its full sequence is Securin (202 aa).

Residues 1–92 form a disordered region; sequence MATLIYVDKE…QKQPSFSAKK (92 aa). Ala-2 carries the post-translational modification N-acetylalanine. Positions 61–64 match the D-box motif; the sequence is RKAL. 2 short sequence motifs (TEK-box) span residues 71–73 and 94–96; these read TEK. Residues 163 to 173 carry the SH3-binding motif; it reads XPSPVKMPSPP. Ser-165 carries the post-translational modification Phosphoserine; by CDK1.

The protein belongs to the securin family. Interacts with RPS10 and DNAJA1. Interacts with the caspase-like ESPL1, and prevents its protease activity probably by covering its active site. Interacts with TP53 and blocks its activity probably by blocking its binding to DNA. Interacts with the Ku 70 kDa subunit of ds-DNA kinase. Interacts with PTTG1IP. In terms of processing, phosphorylated at Ser-165 by CDK1 during mitosis. Post-translationally, phosphorylated in vitro by ds-DNA kinase. Ubiquitinated through 'Lys-11' linkage of ubiquitin moieties by the anaphase promoting complex (APC) at the onset of anaphase, conducting to its degradation. 'Lys-11'-linked ubiquitination is mediated by the E2 ligase UBE2C/UBCH10.

The protein localises to the cytoplasm. It localises to the nucleus. Its function is as follows. Regulatory protein, which plays a central role in chromosome stability, in the p53/TP53 pathway, and DNA repair. Probably acts by blocking the action of key proteins. During the mitosis, it blocks Separase/ESPL1 function, preventing the proteolysis of the cohesin complex and the subsequent segregation of the chromosomes. At the onset of anaphase, it is ubiquitinated, conducting to its destruction and to the liberation of ESPL1. Its function is however not limited to a blocking activity, since it is required to activate ESPL1. Negatively regulates the transcriptional activity and related apoptosis activity of TP53. The negative regulation of TP53 may explain the strong transforming capability of the protein when it is overexpressed. May also play a role in DNA repair via its interaction with Ku, possibly by connecting DNA damage-response pathways with sister chromatid separation. The polypeptide is Securin (PTTG1) (Pan troglodytes (Chimpanzee)).